A 94-amino-acid polypeptide reads, in one-letter code: MIKSELVQTIANRNPHLFLRDVENIVNAIFDEITEALAQGNRVELRGFGAFSVKNRPARTGRNPRTGESVHVEEKWVPFFKTGKELRERLNADE.

The protein belongs to the bacterial histone-like protein family. In terms of assembly, heterodimer of an alpha and a beta chain.

In terms of biological role, this protein is one of the two subunits of integration host factor, a specific DNA-binding protein that functions in genetic recombination as well as in transcriptional and translational control. The polypeptide is Integration host factor subunit beta (Chelativorans sp. (strain BNC1)).